The following is a 312-amino-acid chain: Serpentine receptor class gamma-31 (312 aa).

7 consecutive transmembrane segments (helical) span residues 6–26, 38–58, 92–112, 132–152, 180–200, 218–238, and 259–279; these read LITQ…TVVF, FLKL…NFYI, FIFC…LTSI, TYIL…PLLV, FILV…IICW, LFLV…IAML, and LLSP…LIIF.

This sequence belongs to the nematode receptor-like protein srg family.

The protein resides in the membrane. The protein is Serpentine receptor class gamma-31 (srg-31) of Caenorhabditis elegans.